Consider the following 133-residue polypeptide: Fatty acid-binding protein, heart (133 aa).

At Val2 the chain carries N-acetylvaline. A Phosphothreonine modification is found at Thr8. At Tyr20 the chain carries Phosphotyrosine; by Tyr-kinases. Ser23 is modified (phosphoserine). Thr30 is subject to Phosphothreonine. The residue at position 83 (Ser83) is a Phosphoserine. 127 to 129 provides a ligand contact to (9Z)-octadecenoate; sequence RTY. Residue 127 to 129 coordinates hexadecanoate; that stretch reads RTY. 127 to 129 contributes to the octadecanoate binding site; it reads RTY.

The protein belongs to the calycin superfamily. Fatty-acid binding protein (FABP) family.

Its subcellular location is the cytoplasm. In terms of biological role, FABPs are thought to play a role in the intracellular transport of long-chain fatty acids and their acyl-CoA esters. The polypeptide is Fatty acid-binding protein, heart (FABP3) (Bos mutus grunniens (Wild yak)).